A 367-amino-acid chain; its full sequence is MDVVFALGHFCEAEGPSIIFCTQKLHRSTVSKFFEHPTSKRSIGVTENGNDSPEAFKNELDNRNNADSQSLQSSTESLFKADSEDYLCKKVSKGPESPRVNSFHNSYSRNQSPISRKSSCVTCSTVLPLEFSVPDVQPRLYTNSSTNPDVLYMSSQHPHTQQRYSTLKRLMVRCLSCEYSTLSEASDSMSNPLFFGDQDNGYVISQSFSLRDPSARGGLRRYAIIATCPNQLDLILRYSFISEKFLHIVQFLRISSFNTKNDYSSSRSKTTASSSNGTFASPSFNISSLSGSSNIGTAPSYEISSSIGANVSSLAHTQRLPSFSFLRRRDDIGEGRSLVDITCWDGIFVGLHSSFSWILEVWDLLVV.

2 disordered regions span residues 41–75 (RSIGVTENGNDSPEAFKNELDNRNNADSQSLQSST) and 92–115 (SKGPESPRVNSFHNSYSRNQSPIS). The span at 54–64 (EAFKNELDNRN) shows a compositional bias: basic and acidic residues. Polar residues-rich tracts occupy residues 65–75 (NADSQSLQSST) and 99–115 (RVNSFHNSYSRNQSPIS). In terms of domain architecture, uDENN FLCN/SMCR8-type spans 131–302 (FSVPDVQPRL…SNIGTAPSYE (172 aa)).

The protein belongs to the folliculin family.

Its subcellular location is the nucleus. It localises to the cytoplasm. The chain is Folliculin-like protein bhd1 (bhd1) from Schizosaccharomyces pombe (strain 972 / ATCC 24843) (Fission yeast).